Here is a 224-residue protein sequence, read N- to C-terminus: 7-cyano-7-deazaguanine synthase 1 (224 aa).

Residue Leu-10–Ala-20 coordinates ATP. Cys-189, Cys-199, Cys-202, and Cys-205 together coordinate Zn(2+).

This sequence belongs to the QueC family. Zn(2+) is required as a cofactor.

It catalyses the reaction 7-carboxy-7-deazaguanine + NH4(+) + ATP = 7-cyano-7-deazaguanine + ADP + phosphate + H2O + H(+). Its pathway is purine metabolism; 7-cyano-7-deazaguanine biosynthesis. In terms of biological role, catalyzes the ATP-dependent conversion of 7-carboxy-7-deazaguanine (CDG) to 7-cyano-7-deazaguanine (preQ(0)). In Sphingopyxis alaskensis (strain DSM 13593 / LMG 18877 / RB2256) (Sphingomonas alaskensis), this protein is 7-cyano-7-deazaguanine synthase 1.